The sequence spans 903 residues: Protein translocase subunit SecA (903 aa).

ATP is bound by residues Q87, 105–109 (GEGKT), and D507. Disordered stretches follow at residues 565-584 (ESRR…GDPG) and 855-877 (AEPG…LASQ). Zn(2+) is bound by residues C887, C889, C898, and H899.

Belongs to the SecA family. In terms of assembly, monomer and homodimer. Part of the essential Sec protein translocation apparatus which comprises SecA, SecYEG and auxiliary proteins SecDF-YajC and YidC. Zn(2+) is required as a cofactor.

The protein localises to the cell inner membrane. It localises to the cytoplasm. The catalysed reaction is ATP + H2O + cellular proteinSide 1 = ADP + phosphate + cellular proteinSide 2.. In terms of biological role, part of the Sec protein translocase complex. Interacts with the SecYEG preprotein conducting channel. Has a central role in coupling the hydrolysis of ATP to the transfer of proteins into and across the cell membrane, serving both as a receptor for the preprotein-SecB complex and as an ATP-driven molecular motor driving the stepwise translocation of polypeptide chains across the membrane. In Chromobacterium violaceum (strain ATCC 12472 / DSM 30191 / JCM 1249 / CCUG 213 / NBRC 12614 / NCIMB 9131 / NCTC 9757 / MK), this protein is Protein translocase subunit SecA.